We begin with the raw amino-acid sequence, 172 residues long: MAEKRNIFLVGPMGAGKSTIGRHLAQQLHMEFVDSDTVIEERTGADIAWVFDVEGEEGFRKREEAVLEDLTQEQGIVLATGGGSVKSKENRNRLSARGVVVYLETTIEKQLARTNRDKKRPLLQTDNPREVLESLAGERNPLYEEVADYTVRTDDQSAKVVANQIVKMLEER.

14 to 19 (GAGKST) provides a ligand contact to ATP. Ser18 is a binding site for Mg(2+). Substrate is bound by residues Asp36, Arg60, and Gly82. Residue Arg120 coordinates ATP. Residue Arg139 coordinates substrate. Gln156 contacts ATP.

The protein belongs to the shikimate kinase family. In terms of assembly, monomer. The cofactor is Mg(2+).

The protein localises to the cytoplasm. The catalysed reaction is shikimate + ATP = 3-phosphoshikimate + ADP + H(+). It functions in the pathway metabolic intermediate biosynthesis; chorismate biosynthesis; chorismate from D-erythrose 4-phosphate and phosphoenolpyruvate: step 5/7. Catalyzes the specific phosphorylation of the 3-hydroxyl group of shikimic acid using ATP as a cosubstrate. In Vibrio campbellii (strain ATCC BAA-1116), this protein is Shikimate kinase.